A 1692-amino-acid polypeptide reads, in one-letter code: Protein TOPAZ1 (1692 aa).

Disordered regions lie at residues 1–135 (MRRP…PGLD), 600–629 (ELSRRGSEVISNTTEDTQLTSETQSLTGNK), and 894–919 (EPNVAGEHQSTDSKYMETPVKKEPSD). The segment covering 31 to 40 (GAAGGCGPEA) has biased composition (gly residues). Residues 95–116 (SDPRGLEAAKEAELPLQTERHT) show a composition bias toward basic and acidic residues. A compositionally biased stretch (polar residues) spans 608 to 627 (VISNTTEDTQLTSETQSLTG). The segment covering 902 to 919 (QSTDSKYMETPVKKEPSD) has biased composition (basic and acidic residues).

Its subcellular location is the cytoplasm. The protein localises to the cytosol. Functionally, important for normal spermatogenesis and male fertility. Specifically required for progression to the post-meiotic stages of spermatocyte development. Seems to be necessary for normal expression levels of a number of testis-expressed gene transcripts, although its role in this process is unclear. The polypeptide is Protein TOPAZ1 (TOPAZ1) (Homo sapiens (Human)).